The primary structure comprises 37 residues: Cytochrome b6-f complex subunit 5 (37 aa).

The chain crosses the membrane as a helical span at residues 5 to 25 (LLSGIVLGLIPITLAGLFVTA).

It belongs to the PetG family. As to quaternary structure, the 4 large subunits of the cytochrome b6-f complex are cytochrome b6, subunit IV (17 kDa polypeptide, PetD), cytochrome f and the Rieske protein, while the 4 small subunits are PetG, PetL, PetM and PetN. The complex functions as a dimer.

It is found in the plastid. Its subcellular location is the chloroplast thylakoid membrane. Functionally, component of the cytochrome b6-f complex, which mediates electron transfer between photosystem II (PSII) and photosystem I (PSI), cyclic electron flow around PSI, and state transitions. PetG is required for either the stability or assembly of the cytochrome b6-f complex. This Chara vulgaris (Common stonewort) protein is Cytochrome b6-f complex subunit 5.